Reading from the N-terminus, the 165-residue chain is MTSKKKRQRGSRTHGGGSHKNRRGAGHRGGRGDAGRDKHEFHNHEPLGKSGFKRPQKVQEEAATIDVREIDENVTLLAADDVAEVEDGGFRVDVRDVVEEADDADYVKVLGAGQVRHELTLIADDFSEGAREKVEGAGGSVELTDLGEERQAEAEETEDADADEE.

Residues 1-29 (MTSKKKRQRGSRTHGGGSHKNRRGAGHRG) are compositionally biased toward basic residues. 2 disordered regions span residues 1–59 (MTSK…QKVQ) and 133–165 (KVEGAGGSVELTDLGEERQAEAEETEDADADEE). Positions 30–47 (GRGDAGRDKHEFHNHEPL) are enriched in basic and acidic residues. Residues 154-165 (AEETEDADADEE) show a composition bias toward acidic residues.

It belongs to the universal ribosomal protein uL15 family. Part of the 50S ribosomal subunit. Interacts weakly with proteins L18e and L32e.

Its function is as follows. Binds to the 23S rRNA. This is Large ribosomal subunit protein uL15 (rpl15) from Haloarcula marismortui (strain ATCC 43049 / DSM 3752 / JCM 8966 / VKM B-1809) (Halobacterium marismortui).